The following is a 472-amino-acid chain: Uronate isomerase (472 aa).

This sequence belongs to the metallo-dependent hydrolases superfamily. Uronate isomerase family.

It carries out the reaction D-glucuronate = D-fructuronate. The catalysed reaction is aldehydo-D-galacturonate = keto-D-tagaturonate. Its pathway is carbohydrate metabolism; pentose and glucuronate interconversion. This is Uronate isomerase from Shouchella clausii (strain KSM-K16) (Alkalihalobacillus clausii).